A 972-amino-acid chain; its full sequence is MRGARRAWDFLFVLQLLLRVQTGSSQPSVSPEELSPPSIHPAKSELIVSAGDEIRLFCTDPGSVKWTFETLGQLSENTHAEWIVEKAEAMNTGNYTCTNEGGLSSSIYVFVRDPEKLFLVDPPLYGKEDNDALVRCPLTDPEVTNYSLTGCEGKPLPKDLTFVADPKAGITIKNVKREYHRLCLHCSANQGGKSVLSKKFTLKVRAAIRAVPVVAVSKASYLLREGEEFAVMCLIKDVSSSVDSMWIRENSQTKAQVKRNSWHQGDFNFLRQEKLTISSARVNDSGVFMCYANNTFGSANVTTTLEVVDKGFINIFPMMNTTVFVNDGEDVDLIVEYEAYPKPEHRQWIYMNRTATDKWEDYPKSENESNIRYVSELHLTRLKGTEGGTYTFLVSNADVNSSVTFNVYVNTKPEILTHDRLMNGMLQCVAAGFPEPTIDWYFCPGTEQRCSVPVGPVDVQIQNSSVSPFGKLVIHSSIDYSAFKHNGTVECRAYNDVGKSSAFFNFAFKEQIHAHTLFTPLLIGFVIAAGMMCIIVMILTYKYLQKPMYEVQWKVVEEINGNNYVYIDPTQLPYDHKWEFPRNRLSFGKTLGAGAFGKVVEATAYGLIKSDAAMTVAVKMLKPSAHLTEREALMSELKVLSYLGNHMNIVNLLGACTIGGPTLVITEYCCYGDLLNFLRRKRDSFICSKQEDHAEAALYKNLLHSKESSCSDSTNEYMDMKPGVSYVVPTKADKRRSARIGSYIERDVTPAIMEDDELALDLEDLLSFSYQVAKGMAFLASKNCIHRDLAARNILLTHGRITKICDFGLARDIKNDSNYVVKGNARLPVKWMAPESIFNCVYTFESDVWSYGIFLWELFSLGSSPYPGMPVDSKFYKMIKEGFRMLSPEHAPAEMYDIMKTCWDADPLKRPTFKQIVQLIEKQISESTNHIYSNLANCSPHRENPAVDHSVRINSVGSSASSTQPLLVHEDV.

A signal peptide spans 1–25 (MRGARRAWDFLFVLQLLLRVQTGSS). Over 26–520 (QPSVSPEELS…QIHAHTLFTP (495 aa)) the chain is Extracellular. Ig-like C2-type domains lie at 27–112 (PSVS…VFVR), 121–205 (DPPL…LKVR), 212–308 (PVVA…LEVV), 317–410 (PMMN…VYVN), and 413–507 (PEIL…FNFA). 4 cysteine pairs are disulfide-bonded: Cys58-Cys97, Cys136-Cys186, Cys151-Cys183, and Cys233-Cys290. N-linked (GlcNAc...) asparagine glycans are attached at residues Asn94 and Asn145. Residues Asn283, Asn293, Asn300, Asn320, Asn352, Asn367, Asn400, Asn463, and Asn486 are each glycosylated (N-linked (GlcNAc...) asparagine). Residues Cys428 and Cys491 are joined by a disulfide bond. A helical transmembrane segment spans residues 521-541 (LLIGFVIAAGMMCIIVMILTY). Residues 542-972 (KYLQKPMYEV…TQPLLVHEDV (431 aa)) are Cytoplasmic-facing. A phosphotyrosine; by autocatalysis mark is found at Tyr543, Tyr549, Tyr564, and Tyr566. A Mg(2+)-binding site is contributed by Tyr564. Residues 564–566 (YVY) form an important for interaction with phosphotyrosine-binding proteins region. One can recognise a Protein kinase domain in the interval 585–933 (LSFGKTLGAG…ISESTNHIYS (349 aa)). Residues 592-599 (GAGAFGKV), Lys619, and 667-673 (EYCCYGD) each bind ATP. Tyr699, Tyr717, and Tyr726 each carry phosphotyrosine; by autocatalysis. A phosphoserine; by PKC/PRKCA mark is found at Ser737 and Ser742. Asp788 functions as the Proton acceptor in the catalytic mechanism. Arg792 provides a ligand contact to ATP. 2 residues coordinate Mg(2+): Asn793 and Asp806. The residue at position 817 (Ser817) is a Phosphoserine. Tyr819 is modified (phosphotyrosine; by autocatalysis). The residue at position 887 (Ser887) is a Phosphoserine. A phosphotyrosine; by autocatalysis mark is found at Tyr896 and Tyr932. Ser955 bears the Phosphoserine mark.

It belongs to the protein kinase superfamily. Tyr protein kinase family. CSF-1/PDGF receptor subfamily. In terms of assembly, monomer in the absence of bound KITLG/SCF. Homodimer in the presence of bound KITLG/SCF, forming a heterotetramer with two KITLG/SCF molecules. Interacts (via phosphorylated tyrosine residues) with the adapter proteins GRB2 and GRB7 (via SH2 domain), and SH2B2/APS. Interacts (via C-terminus) with MPDZ (via the tenth PDZ domain). Interacts (via phosphorylated tyrosine residues) with PIK3R1 and PIK3 catalytic subunit. Interacts (via phosphorylated tyrosine) with CRK (isoform Crk-II), FYN, SHC1 and MATK/CHK (via SH2 domain). Interacts with LYN and FES/FPS. Interacts (via phosphorylated tyrosine residues) with the protein phosphatases PTPN6/SHP-1 (via SH2 domain), PTPN11/SHP-2 (via SH2 domain) and PTPRU. Interacts with PLCG1. Interacts with DOK1 and TEC. Interacts with IL1RAP (independent of stimulation with KITLG/SCF). A mast cell-specific KITLG/SCF-induced interleukin-33 signaling complex contains IL1RL1, IL1RAP, KIT and MYD88. In terms of processing, ubiquitinated by SOCS6. KIT is rapidly ubiquitinated after autophosphorylation induced by KITLG/SCF binding, leading to internalization and degradation. Autophosphorylated on tyrosine residues. KITLG/SCF binding promotes autophosphorylation. Phosphorylated tyrosine residues are important for interaction with specific binding partners.

It localises to the cell membrane. The enzyme catalyses L-tyrosyl-[protein] + ATP = O-phospho-L-tyrosyl-[protein] + ADP + H(+). Its activity is regulated as follows. Present in an inactive conformation in the absence of bound ligand. KITLG/SCF binding leads to dimerization and activation by autophosphorylation on tyrosine residues. Activity is down-regulated by PRKCA-mediated phosphorylation on serine residues. Its function is as follows. Tyrosine-protein kinase that acts as a cell-surface receptor for the cytokine KITLG/SCF and plays an essential role in the regulation of cell survival and proliferation, hematopoiesis, stem cell maintenance, gametogenesis, mast cell development, migration and function, and in melanogenesis. In response to KITLG/SCF binding, KIT can activate several signaling pathways. Phosphorylates PIK3R1, PLCG1, SH2B2/APS and CBL. Activates the AKT1 signaling pathway by phosphorylation of PIK3R1, the regulatory subunit of phosphatidylinositol 3-kinase. Activated KIT also transmits signals via GRB2 and activation of RAS, RAF1 and the MAP kinases MAPK1/ERK2 and/or MAPK3/ERK1. Promotes activation of STAT family members STAT1, STAT3, STAT5A and STAT5B. Activation of PLCG1 leads to the production of the cellular signaling molecules diacylglycerol and inositol 1,4,5-trisphosphate. KIT signaling is modulated by protein phosphatases, and by rapid internalization and degradation of the receptor. Activated KIT promotes phosphorylation of the protein phosphatases PTPN6/SHP-1 and PTPRU, and of the transcription factors STAT1, STAT3, STAT5A and STAT5B. Promotes phosphorylation of PIK3R1, CBL, CRK (isoform Crk-II), LYN, MAPK1/ERK2 and/or MAPK3/ERK1, PLCG1, SRC and SHC1. This Sus scrofa (Pig) protein is Mast/stem cell growth factor receptor Kit (KIT).